Consider the following 63-residue polypeptide: Large ribosomal subunit protein uL29 (63 aa).

Belongs to the universal ribosomal protein uL29 family.

This is Large ribosomal subunit protein uL29 from Erwinia tasmaniensis (strain DSM 17950 / CFBP 7177 / CIP 109463 / NCPPB 4357 / Et1/99).